We begin with the raw amino-acid sequence, 291 residues long: tRNA U34 carboxymethyltransferase (291 aa).

Residues K61, W75, K80, G100, 122-124 (DPS), 149-150 (VE), Y169, and R284 each bind carboxy-S-adenosyl-L-methionine.

Belongs to the class I-like SAM-binding methyltransferase superfamily. CmoB family. In terms of assembly, homotetramer.

The catalysed reaction is carboxy-S-adenosyl-L-methionine + 5-hydroxyuridine(34) in tRNA = 5-carboxymethoxyuridine(34) in tRNA + S-adenosyl-L-homocysteine + H(+). Its function is as follows. Catalyzes carboxymethyl transfer from carboxy-S-adenosyl-L-methionine (Cx-SAM) to 5-hydroxyuridine (ho5U) to form 5-carboxymethoxyuridine (cmo5U) at position 34 in tRNAs. In Campylobacter jejuni subsp. jejuni serotype O:6 (strain 81116 / NCTC 11828), this protein is tRNA U34 carboxymethyltransferase.